We begin with the raw amino-acid sequence, 170 residues long: RNA polymerase sigma factor TcsR (170 aa).

The sigma-70 factor domain-4 stretch occupies residues 122–169; the sequence is IKDLTQNEKNILRKIYLHGLRESEISRELNISRQAVNKTHLRALEKLK. Positions 143–162 form a DNA-binding region, H-T-H motif; the sequence is ESEISRELNISRQAVNKTHL.

Belongs to the sigma-70 factor family.

Sigma factors are initiation factors that promote the attachment of RNA polymerase to specific initiation sites and are then released. Transcriptional regulator specifically required to activate expression of the toxin gene locus, composed of tcsL and tcdE/utxA. This chain is RNA polymerase sigma factor TcsR, found in Paraclostridium sordellii (strain ATCC 9714 / DSM 2141 / JCM 3814 / LMG 15708 / NCIMB 10717 / 211) (Clostridium sordellii).